The following is a 245-amino-acid chain: Type II restriction enzyme EcoRV (245 aa).

Residues E45, D74, and D90 each coordinate Mg(2+). Residues D74, D90, and K92 contribute to the active site.

Homodimer. It depends on Mg(2+) as a cofactor.

It catalyses the reaction Endonucleolytic cleavage of DNA to give specific double-stranded fragments with terminal 5'-phosphates.. Functionally, a P subtype restriction enzyme that recognizes the double-stranded sequence 5'-GATATC-3' and cleaves after T-3. In Escherichia coli, this protein is Type II restriction enzyme EcoRV (ecoRVR).